We begin with the raw amino-acid sequence, 471 residues long: Ribulose bisphosphate carboxylase large chain (471 aa).

Positions 115 and 165 each coordinate substrate. Lysine 167 serves as the catalytic Proton acceptor. Lysine 169 lines the substrate pocket. Residues lysine 193, aspartate 195, and glutamate 196 each coordinate Mg(2+). Lysine 193 bears the N6-carboxylysine mark. Catalysis depends on histidine 286, which acts as the Proton acceptor. The substrate site is built by arginine 287, histidine 319, and serine 371.

This sequence belongs to the RuBisCO large chain family. Type I subfamily. Heterohexadecamer of 8 large chains and 8 small chains. It depends on Mg(2+) as a cofactor.

Its subcellular location is the carboxysome. It catalyses the reaction 2 (2R)-3-phosphoglycerate + 2 H(+) = D-ribulose 1,5-bisphosphate + CO2 + H2O. It carries out the reaction D-ribulose 1,5-bisphosphate + O2 = 2-phosphoglycolate + (2R)-3-phosphoglycerate + 2 H(+). In terms of biological role, ruBisCO catalyzes two reactions: the carboxylation of D-ribulose 1,5-bisphosphate, the primary event in carbon dioxide fixation, as well as the oxidative fragmentation of the pentose substrate in the photorespiration process. Both reactions occur simultaneously and in competition at the same active site. The protein is Ribulose bisphosphate carboxylase large chain of Prochlorococcus marinus (strain MIT 9515).